Here is a 272-residue protein sequence, read N- to C-terminus: 3-methyl-2-oxobutanoate hydroxymethyltransferase (272 aa).

Positions 52 and 91 each coordinate Mg(2+). 3-methyl-2-oxobutanoate contacts are provided by residues 52–53 (DS), D91, and K121. E123 contributes to the Mg(2+) binding site. The Proton acceptor role is filled by E190.

It belongs to the PanB family. Homodecamer; pentamer of dimers. Requires Mg(2+) as cofactor.

Its subcellular location is the cytoplasm. The enzyme catalyses 3-methyl-2-oxobutanoate + (6R)-5,10-methylene-5,6,7,8-tetrahydrofolate + H2O = 2-dehydropantoate + (6S)-5,6,7,8-tetrahydrofolate. The protein operates within cofactor biosynthesis; (R)-pantothenate biosynthesis; (R)-pantoate from 3-methyl-2-oxobutanoate: step 1/2. Its function is as follows. Catalyzes the reversible reaction in which hydroxymethyl group from 5,10-methylenetetrahydrofolate is transferred onto alpha-ketoisovalerate to form ketopantoate. This chain is 3-methyl-2-oxobutanoate hydroxymethyltransferase, found in Flavobacterium johnsoniae (strain ATCC 17061 / DSM 2064 / JCM 8514 / BCRC 14874 / CCUG 350202 / NBRC 14942 / NCIMB 11054 / UW101) (Cytophaga johnsonae).